The following is a 115-amino-acid chain: Putative UPF0320 protein YKL225W (115 aa).

Belongs to the UPF0320 family.

The protein is Putative UPF0320 protein YKL225W of Saccharomyces cerevisiae (strain ATCC 204508 / S288c) (Baker's yeast).